The chain runs to 221 residues: Ras-related protein Rab-27A (221 aa).

Ser2 is subject to N-acetylserine. Residue Ser2 is modified to Phosphoserine. 16–24 (GDSGVGKTS) contributes to the GTP binding site. The short motif at 38–46 (FITTVGIDF) is the Effector region element. GTP is bound by residues 74-78 (DTAGQ), 133-136 (NKSD), and 163-165 (SAA). Cys123 and Cys188 form a disulfide bridge. The disordered stretch occupies residues 202 to 221 (NGHTSADPLNEEKEKGSCGC). A compositionally biased stretch (basic and acidic residues) spans 211–221 (NEEKEKGSCGC). 2 S-geranylgeranyl cysteine lipidation sites follow: Cys219 and Cys221. Residue Cys221 is modified to Cysteine methyl ester.

The protein belongs to the small GTPase superfamily. Rab family. In terms of assembly, binds SYTL1, SLAC2B, MYRIP, SYTL3, SYTL4 and SYTL5. Interacts with RPH3A and RPH3A. Binds MLPH and SYTL2. Interacts with UNC13D. Does not interact with the BLOC-3 complex (heterodimer of HPS1 and HPS4). Interacts (GDP-bound form preferentially) with DENND10.

The protein localises to the membrane. It localises to the melanosome. Its subcellular location is the late endosome. The protein resides in the lysosome. The catalysed reaction is GTP + H2O = GDP + phosphate + H(+). Its activity is regulated as follows. Regulated by guanine nucleotide exchange factors (GEFs) which promote the exchange of bound GDP for free GTP, GTPase activating proteins (GAPs) which increase the GTP hydrolysis activity, and GDP dissociation inhibitors which inhibit the dissociation of the nucleotide from the GTPase. Activated by GEFs such as DENND10. Its function is as follows. Small GTPase which cycles between active GTP-bound and inactive GDP-bound states. In its active state, binds to a variety of effector proteins to regulate homeostasis of late endocytic pathway, including endosomal positioning, maturation and secretion. Plays a role in cytotoxic granule exocytosis in lymphocytes. Required for both granule maturation and granule docking and priming at the immunologic synapse. The protein is Ras-related protein Rab-27A (RAB27A) of Sus scrofa (Pig).